We begin with the raw amino-acid sequence, 858 residues long: MSESDKYELLEKIGHGSFGIIRKVRRKADGMILCRKEISYLKMSQKEREQLHAEFSILSTLRHPNIVGYYHREHLKATQDLHLYMEYCGNGDLGRVIRNLIKNNQYAEESFVWSIFSQLVTALYRCHYGVDPPEVGKTVLGLGSTARPKPPSGGMTILHRDLKPENVFLGEDNSVKLGDFGLSKVMQSHDFASTYVGTPFYMSPEICAAEKYTLKSDIWSLGCIIYELCAREPPFNAKTHYQLVQKIKEGKIAPLPSVYSGELFATIKDCLRVNPDRRPDTATLLNLPIVRLMRKEKEVVEFSRTLRTKEETLNKRIRELDSKLSALETEKSSIRAEIDASLRREWEVKARLEIDRLVAQEIESLQQKFEQEVQARVEAELQRHGRGPMFNSHGQQGSFSSTAATLVSDYNLSSVGSGDGDFPSTTDITDISIAESTDGSDITKKIPRTPFHRAQTYSSAPAESVLGTPMDIEMASPSPITIASLSLSPRRMALTKAPTTNPRMIFGEEPTSTDKSNWEVPRETEMIDSGDESEAEALVPSPKRITKSSKNPFSTVTTRSRPSLNSQQNSNVLPIHGLRSKQTLATRSKTVSGVSSIGQHPLRSAPSAPSLRDRKPSPTRRLSRIPSVTGVGRRLSANNINNSSNGGSDAPSSTVTSNITVRTRGLKRMSSTCDESSFSQQQNNQPQQSLPQAPPLKKIGLMAAKNIRGSSLVELHQARAGGRPISAIISNEAKLRAFKEHATIAASAVDSSSSSSSSSGQSQLPTRPRSQPQPITANFEQQQQQQQSNTNSISSSNSAGSGSATGTGTGAGTKSMPWPVAPVWNREVETEEMPSPFIVKTSKRPASFVRPASNLSQS.

The Protein kinase domain maps to 7 to 290 (YELLEKIGHG…TATLLNLPIV (284 aa)). Residues 13 to 21 (IGHGSFGII) and lysine 36 each bind ATP. The Proton acceptor role is filled by aspartate 161. Threonine 194 is modified (phosphothreonine; by autocatalysis). A coiled-coil region spans residues 291–383 (RLMRKEKEVV…QARVEAELQR (93 aa)). 2 disordered regions span residues 495 to 693 (TKAP…LPQA) and 747 to 858 (SAVD…LSQS). The segment covering 516 to 525 (SNWEVPRETE) has biased composition (basic and acidic residues). The segment covering 526–535 (MIDSGDESEA) has biased composition (acidic residues). Composition is skewed to polar residues over residues 548-572 (SSKN…NSNV) and 580-598 (SKQT…SSIG). Over residues 636–648 (SANNINNSSNGGS) the composition is skewed to low complexity. The segment covering 650–661 (APSSTVTSNITV) has biased composition (polar residues). Residues 676 to 691 (SSFSQQQNNQPQQSLP) show a composition bias toward low complexity. A compositionally biased stretch (polar residues) spans 760-780 (GQSQLPTRPRSQPQPITANFE). Residues 781 to 802 (QQQQQQQSNTNSISSSNSAGSG) are compositionally biased toward low complexity.

The protein belongs to the protein kinase superfamily. CAMK Ser/Thr protein kinase family.

The protein resides in the nucleus. It carries out the reaction L-seryl-[protein] + ATP = O-phospho-L-seryl-[protein] + ADP + H(+). It catalyses the reaction L-threonyl-[protein] + ATP = O-phospho-L-threonyl-[protein] + ADP + H(+). Its function is as follows. Protein kinase that plays an important role in mitotic regulation. The protein is G2-specific protein kinase nim-1 (nim-1) of Neurospora crassa (strain ATCC 24698 / 74-OR23-1A / CBS 708.71 / DSM 1257 / FGSC 987).